Here is a 225-residue protein sequence, read N- to C-terminus: Transmembrane emp24 domain-containing protein p24delta11 (225 aa).

An N-terminal signal peptide occupies residues 1-35; it reads MDLLPSRYKIHKTKLRWILTMMTMMMMMVMRRGES. Residues 36–193 lie on the Lumenal side of the membrane; that stretch reads MRLDMESGNT…ELNRSTNSRM (158 aa). The GOLD domain occupies 45-160; sequence TKCISDDIKT…ITMLEVEVRK (116 aa). The stretch at 175-188 forms a coiled coil; it reads LIEREREMQELNRS. An Omega-N-methylated arginine modification is found at Arg178. Asn186 is a glycosylation site (N-linked (GlcNAc...) asparagine). The chain crosses the membrane as a helical span at residues 194-210; the sequence is AALSLLSFVVTMSVAGL. At 211–225 the chain is on the cytoplasmic side; sequence QLRHLKSFLERKKLL. The COPII vesicle coat-binding motif lies at 218 to 219; that stretch reads FL. Residues 218–225 carry the COPI vesicle coat-binding motif; the sequence is FLERKKLL.

This sequence belongs to the EMP24/GP25L family. In terms of assembly, probably oligomerizes with other members of the EMP24/GP25L family. Associates with the COPI vesicle coat (coatomer). Associates with the COPII vesicle coat (coatomer).

It is found in the endoplasmic reticulum membrane. Its subcellular location is the golgi apparatus. It localises to the cis-Golgi network membrane. The protein localises to the golgi stack membrane. Involved in vesicular protein trafficking. Mainly functions in the early secretory pathway. Thought to act as cargo receptor at the lumenal side for incorporation of secretory cargo molecules into transport vesicles and to be involved in vesicle coat formation at the cytoplasmic side. This Arabidopsis thaliana (Mouse-ear cress) protein is Transmembrane emp24 domain-containing protein p24delta11.